We begin with the raw amino-acid sequence, 560 residues long: Flagellar M-ring protein (560 aa).

The chain crosses the membrane as a helical span at residues 26-46 (IPLIVAGSAAVAIVVAMVLWA). The interval 304–372 (VGAGYPGGVP…TSNYEVDRTI (69 aa)) is disordered. Residues 331–353 (PPTNQQNAQNTPQTSTSTNSNSA) are compositionally biased toward low complexity. Residues 354 to 366 (GPRSTQRNETSNY) show a composition bias toward polar residues. A helical membrane pass occupies residues 455–475 (FIDQLLAAGRWLLVLVVAWIL).

It belongs to the FliF family. As to quaternary structure, the basal body constitutes a major portion of the flagellar organelle and consists of four rings (L,P,S, and M) mounted on a central rod. The M ring is integral to the inner membrane of the cell and may be connected to the flagellar rod via the S ring. The S (supramembrane ring) lies just distal to the M ring. The L and P rings lie in the outer membrane and the periplasmic space, respectively.

Its subcellular location is the cell inner membrane. The protein localises to the bacterial flagellum basal body. In terms of biological role, the M ring may be actively involved in energy transduction. In Salmonella typhimurium (strain LT2 / SGSC1412 / ATCC 700720), this protein is Flagellar M-ring protein (fliF).